The following is a 154-amino-acid chain: MPKTDVSGLSMLGNQTETAANPEVAVLEKVPAGYAGTDYVVRFTAPEFTSLCPMTGQPDFAHIVIDYVPNEWLVESKSLKLFLHSFRNHGAFHEDCSIYIAKRLVELLEPKWLRIGAYWYPRGGIPIDVFWQTGKPPEGVWLPDQGVQPYRGRG.

Cys-52 acts as the Thioimide intermediate in catalysis. Asp-59 functions as the Proton donor in the catalytic mechanism. Residues 74-76 (VES) and 93-94 (HE) each bind substrate.

This sequence belongs to the GTP cyclohydrolase I family. QueF type 1 subfamily.

It is found in the cytoplasm. The enzyme catalyses 7-aminomethyl-7-carbaguanine + 2 NADP(+) = 7-cyano-7-deazaguanine + 2 NADPH + 3 H(+). Its pathway is tRNA modification; tRNA-queuosine biosynthesis. Functionally, catalyzes the NADPH-dependent reduction of 7-cyano-7-deazaguanine (preQ0) to 7-aminomethyl-7-deazaguanine (preQ1). The chain is NADPH-dependent 7-cyano-7-deazaguanine reductase from Rhizobium rhizogenes (strain K84 / ATCC BAA-868) (Agrobacterium radiobacter).